A 152-amino-acid chain; its full sequence is 3-hydroxyacyl-[acyl-carrier-protein] dehydratase FabZ (152 aa).

Residue H54 is part of the active site.

This sequence belongs to the thioester dehydratase family. FabZ subfamily.

It is found in the cytoplasm. The enzyme catalyses a (3R)-hydroxyacyl-[ACP] = a (2E)-enoyl-[ACP] + H2O. Its function is as follows. Involved in unsaturated fatty acids biosynthesis. Catalyzes the dehydration of short chain beta-hydroxyacyl-ACPs and long chain saturated and unsaturated beta-hydroxyacyl-ACPs. This Buchnera aphidicola subsp. Schizaphis graminum (strain Sg) protein is 3-hydroxyacyl-[acyl-carrier-protein] dehydratase FabZ.